The following is a 135-amino-acid chain: Histone H3 type 1 (135 aa).

A disordered region spans residues 1–40 (MARTKQTARKSTGGKAPRKQLATKAARKTPATGGVKKPHR). Residue lysine 5 is modified to N6-methyllysine. Lysine 10 carries the N6-acetyllysine; alternate modification. Lysine 10 is subject to N6-methyllysine; alternate. Serine 11 carries the post-translational modification Phosphoserine. Phosphothreonine is present on threonine 12. Lysine 15, lysine 19, and lysine 24 each carry N6-acetyllysine. Lysine 28 carries the N6-acetyllysine; alternate modification. Lysine 28 bears the N6-methyllysine; alternate mark. Lysine 36 and lysine 37 each carry N6-methyllysine.

It belongs to the histone H3 family. As to quaternary structure, the nucleosome is a histone octamer containing two molecules each of H2A, H2B, H3 and H4 assembled in one H3-H4 heterotetramer and two H2A-H2B heterodimers. The octamer wraps approximately 147 bp of DNA. Post-translationally, acetylation is generally linked to gene activation. Acetylated to form H3K9ac (11%), H3K14ac (17%), H3K18ac (11%), H3K23ac (16%) and H3K27ac (7%). H3K4, H3K35 and H3K36 are not acetylated. H3K4me prevents acetylation. 32% of the histone H3 are acetylated with, on average, 2.4 acetyl-Lys. They are all continuously deacatylated and re-acetylated with a half-life of approximately 2 minutes. In terms of processing, monomethylated to form H3K4me1 (81%), H3K9me1 (16%), H3K27me1 (25%), H3K35me1 (25%) and H3K36me1 (5%). No methylation at H3K14, H3K18 and H3K23. Methylated by a protein complex that includes Mut11. Set1 methylates specifically H3K4. H3K4me1 is associated with silenced euchromatin. Set3 forms H3K9me1, while H3K9me2 is undetected. H3K9me1 is specifically associated with silent, multi-copy transgenes. No phosphorylation detected.

It is found in the nucleus. Its subcellular location is the chromosome. Its function is as follows. Core component of nucleosome. Nucleosomes wrap and compact DNA into chromatin, limiting DNA accessibility to the cellular machineries which require DNA as a template. Histones thereby play a central role in transcription regulation, DNA repair, DNA replication and chromosomal stability. DNA accessibility is regulated via a complex set of post-translational modifications of histones, also called histone code, and nucleosome remodeling. The sequence is that of Histone H3 type 1 (ch3-I) from Chlamydomonas reinhardtii (Chlamydomonas smithii).